The following is a 354-amino-acid chain: Fructose-bisphosphate aldolase (354 aa).

S50 serves as a coordination point for D-glyceraldehyde 3-phosphate. The active-site Proton donor is D83. Positions 84, 105, 142, and 198 each coordinate Zn(2+). Residue G199 participates in dihydroxyacetone phosphate binding. Residue H232 coordinates Zn(2+). Dihydroxyacetone phosphate-binding positions include 233-235 (GSS) and 275-278 (NIDT).

Belongs to the class II fructose-bisphosphate aldolase family. The cofactor is Zn(2+).

It catalyses the reaction beta-D-fructose 1,6-bisphosphate = D-glyceraldehyde 3-phosphate + dihydroxyacetone phosphate. The protein operates within carbohydrate degradation; glycolysis; D-glyceraldehyde 3-phosphate and glycerone phosphate from D-glucose: step 4/4. In terms of biological role, catalyzes the aldol condensation of dihydroxyacetone phosphate (DHAP or glycerone-phosphate) with glyceraldehyde 3-phosphate (G3P) to form fructose 1,6-bisphosphate (FBP) in gluconeogenesis and the reverse reaction in glycolysis. This is Fructose-bisphosphate aldolase (fba) from Pseudomonas aeruginosa (strain ATCC 15692 / DSM 22644 / CIP 104116 / JCM 14847 / LMG 12228 / 1C / PRS 101 / PAO1).